We begin with the raw amino-acid sequence, 439 residues long: Xylose isomerase (439 aa).

Residues His101 and Asp104 contribute to the active site. Glu232, Glu268, His271, Asp296, Asp307, Asp309, and Asp339 together coordinate Mg(2+).

Belongs to the xylose isomerase family. Homotetramer. Mg(2+) serves as cofactor.

It localises to the cytoplasm. It carries out the reaction alpha-D-xylose = alpha-D-xylulofuranose. This chain is Xylose isomerase, found in Yersinia pseudotuberculosis serotype O:1b (strain IP 31758).